The chain runs to 174 residues: FAD synthase (174 aa).

ATP-binding positions include 34-35 (TF), 39-42 (HPGH), Asp119, and Tyr147.

It belongs to the archaeal FAD synthase family. Homodimer. It depends on a divalent metal cation as a cofactor.

It catalyses the reaction FMN + ATP + H(+) = FAD + diphosphate. The protein operates within cofactor biosynthesis; FAD biosynthesis; FAD from FMN: step 1/1. Functionally, catalyzes the transfer of the AMP portion of ATP to flavin mononucleotide (FMN) to produce flavin adenine dinucleotide (FAD) coenzyme. The sequence is that of FAD synthase from Methanococcus voltae (strain ATCC BAA-1334 / A3).